A 474-amino-acid chain; its full sequence is Ribulose bisphosphate carboxylase large chain (474 aa).

The substrate site is built by Asn-122 and Thr-172. Lys-174 (proton acceptor) is an active-site residue. Lys-176 lines the substrate pocket. 3 residues coordinate Mg(2+): Lys-200, Asp-202, and Glu-203. Lys-200 carries the N6-carboxylysine modification. His-293 acts as the Proton acceptor in catalysis. Residues Arg-294, His-326, and Ser-378 each contribute to the substrate site.

This sequence belongs to the RuBisCO large chain family. Type I subfamily. As to quaternary structure, heterohexadecamer of 8 large chains and 8 small chains; disulfide-linked. The disulfide link is formed within the large subunit homodimers. Mg(2+) serves as cofactor. Post-translationally, the disulfide bond which can form in the large chain dimeric partners within the hexadecamer appears to be associated with oxidative stress and protein turnover.

It localises to the carboxysome. The enzyme catalyses 2 (2R)-3-phosphoglycerate + 2 H(+) = D-ribulose 1,5-bisphosphate + CO2 + H2O. The catalysed reaction is D-ribulose 1,5-bisphosphate + O2 = 2-phosphoglycolate + (2R)-3-phosphoglycerate + 2 H(+). RuBisCO catalyzes two reactions: the carboxylation of D-ribulose 1,5-bisphosphate, the primary event in carbon dioxide fixation, as well as the oxidative fragmentation of the pentose substrate in the photorespiration process. Both reactions occur simultaneously and in competition at the same active site. The sequence is that of Ribulose bisphosphate carboxylase large chain from Synechococcus sp. (strain JA-2-3B'a(2-13)) (Cyanobacteria bacterium Yellowstone B-Prime).